Here is a 449-residue protein sequence, read N- to C-terminus: Glucose-6-phosphate isomerase (449 aa).

Glu291 acts as the Proton donor in catalysis. Residues His312 and Lys426 contribute to the active site.

Belongs to the GPI family.

The protein localises to the cytoplasm. It carries out the reaction alpha-D-glucose 6-phosphate = beta-D-fructose 6-phosphate. Its pathway is carbohydrate biosynthesis; gluconeogenesis. The protein operates within carbohydrate degradation; glycolysis; D-glyceraldehyde 3-phosphate and glycerone phosphate from D-glucose: step 2/4. Its function is as follows. Catalyzes the reversible isomerization of glucose-6-phosphate to fructose-6-phosphate. In Streptococcus pyogenes serotype M12 (strain MGAS2096), this protein is Glucose-6-phosphate isomerase.